A 382-amino-acid polypeptide reads, in one-letter code: Bestrophin-6 (382 aa).

The next 4 helical transmembrane spans lie at 29–49 (WKLI…VLAI), 68–88 (FINF…TTIV), 231–251 (LAYP…CAFA), and 265–285 (VIHY…MGWL).

It belongs to the anion channel-forming bestrophin (TC 1.A.46) family. Calcium-sensitive chloride channel subfamily.

It is found in the membrane. This Caenorhabditis elegans protein is Bestrophin-6 (best-6).